A 221-amino-acid chain; its full sequence is Transcriptional regulator GfcR (221 aa).

Residues Ala35 to Ala59 form a disordered region. Over residues Ser42–Thr57 the composition is skewed to polar residues.

Belongs to the purine/pyrimidine phosphoribosyltransferase family. GfcR subfamily.

DNA-binding transcriptional regulator that functions as a regulator of central sugar catabolic pathways. The polypeptide is Transcriptional regulator GfcR (Haloquadratum walsbyi (strain DSM 16790 / HBSQ001)).